We begin with the raw amino-acid sequence, 844 residues long: 3',5'-cyclic-AMP phosphodiesterase 4A (844 aa).

The tract at residues 1–124 is disordered; the sequence is MEPPAAPSER…RSPLDSQASP (124 aa). Residue Ser13 is modified to Phosphoserine. The segment covering 36–46 has biased composition (low complexity); sequence QPRTPIRIQQR. Residues 51–78 are compositionally biased toward basic and acidic residues; sequence SAERSEPERSPHRPIERADAVDTGDRPG. The segment covering 82–91 has biased composition (polar residues); that stretch reads TRMSWPSSFH. Phosphoserine occurs at positions 147, 152, 160, 204, and 333. The PDEase domain occupies 343–672; the sequence is VKTDQEDLLA…DWYHSAIRQS (330 aa). Residue Lys344 forms a Glycyl lysine isopeptide (Lys-Gly) (interchain with G-Cter in SUMO) linkage. The active-site Proton donor is the His419. His419 is a binding site for 3',5'-cyclic AMP. AMP-binding residues include His419 and His423. Positions 423, 459, 460, and 577 each coordinate Zn(2+). The AMP site is built by Asp460, Asp577, Gln628, and Phe631. Asp460 lines the Mg(2+) pocket. Asp460 lines the Mn(2+) pocket. The 3',5'-cyclic AMP site is built by Gln628 and Phe631. Ser672 and Ser674 each carry phosphoserine. Residues 819–844 are disordered; that stretch reads ACSGTSGDNSAVISAPGRWGSGGDPA. The segment covering 820–830 has biased composition (polar residues); sequence CSGTSGDNSAV.

Belongs to the cyclic nucleotide phosphodiesterase family. PDE4 subfamily. Interacts with LYN (via SH3 domain). Interacts with ARRB2. Zn(2+) serves as cofactor. The cofactor is Mg(2+). Mn(2+) is required as a cofactor. Post-translationally, proteolytically cleaved by CASP3.

The protein resides in the cytoplasm. The protein localises to the cytosol. Its subcellular location is the membrane. The catalysed reaction is 3',5'-cyclic AMP + H2O = AMP + H(+). It functions in the pathway purine metabolism; 3',5'-cyclic AMP degradation; AMP from 3',5'-cyclic AMP: step 1/1. Inhibited by rolipram and diazepam. Hydrolyzes the second messenger 3',5'-cyclic AMP (cAMP), which is a key regulator of many important physiological processes. In terms of biological role, efficiently hydrolyzes cAMP. This Mus musculus (Mouse) protein is 3',5'-cyclic-AMP phosphodiesterase 4A (Pde4a).